A 387-amino-acid chain; its full sequence is MTSTPTALSIAQDLLRCPSVTPADAGALDVLETLLKGAGFTVHRVTFSEPGTADIDNLYARIGNTSPHLCFAGHTDVVPPGDASAWTHGAFAGDVADGLLYGRGAVDMKGGIACAVAATLDYLAANGGQPKGSISFLITGDEEDVAVNGTVKLLQWAAERGEQFDHCIVGEPSNVETIGDTIKIGRRGSQSGVLIVDGVQGHVAYPHRAANPVPDIARLITTLNDEPLDHGSAQFQPSNLEFTSVDVGNPATNVIPAQARAKFNIRFNDHHTQETLKALVEQRLAAACGNRIRAHIEWLPSNADVFVTKPGAFTDLVGAAIAEVTGRTPELNTGGGTSDARFIAKYCQVVEFGLVGQTMHQIDERTPVSDLDKLTAIYRGVLQRYFA.

His-74 serves as a coordination point for Zn(2+). The active site involves Asp-76. Residue Asp-107 coordinates Zn(2+). The active-site Proton acceptor is Glu-142. Zn(2+) is bound by residues Glu-143, Glu-171, and His-360.

It belongs to the peptidase M20A family. DapE subfamily. As to quaternary structure, homodimer. Zn(2+) serves as cofactor. Co(2+) is required as a cofactor.

It carries out the reaction N-succinyl-(2S,6S)-2,6-diaminopimelate + H2O = (2S,6S)-2,6-diaminopimelate + succinate. It functions in the pathway amino-acid biosynthesis; L-lysine biosynthesis via DAP pathway; LL-2,6-diaminopimelate from (S)-tetrahydrodipicolinate (succinylase route): step 3/3. Catalyzes the hydrolysis of N-succinyl-L,L-diaminopimelic acid (SDAP), forming succinate and LL-2,6-diaminopimelate (DAP), an intermediate involved in the bacterial biosynthesis of lysine and meso-diaminopimelic acid, an essential component of bacterial cell walls. This is Succinyl-diaminopimelate desuccinylase from Rhodopseudomonas palustris (strain TIE-1).